The chain runs to 256 residues: Floral homeotic protein APETALA 1 (256 aa).

The 61-residue stretch at 1 to 61 (MGRGRVQLKR…GKLFEYSTDS (61 aa)) folds into the MADS-box domain. Residues 88 to 178 (NTNWSMEYNR…FKQIKEREKI (91 aa)) form the K-box domain.

Homodimer capable of binding to CArG-box sequences.

The protein localises to the nucleus. Functionally, transcription factor that promotes early floral meristem identity in synergy with LEAFY. Displays a redundant function with CAULIFLOWER in the up-regulation of LEAFY. Required subsequently for the transition of an inflorescence meristem into a floral meristem, and for the normal development of sepals and petals in flowers. Regulates positively B class homeotic proteins. The chain is Floral homeotic protein APETALA 1 (AP1) from Citrus sinensis (Sweet orange).